The chain runs to 406 residues: 2,3-bisphosphoglycerate-independent phosphoglycerate mutase (406 aa).

Residues 164 to 184 (VSSNDPKKTGVQPKTIHPDDD) are disordered.

This sequence belongs to the BPG-independent phosphoglycerate mutase family. A-PGAM subfamily.

It catalyses the reaction (2R)-2-phosphoglycerate = (2R)-3-phosphoglycerate. The protein operates within carbohydrate degradation; glycolysis; pyruvate from D-glyceraldehyde 3-phosphate: step 3/5. In terms of biological role, catalyzes the interconversion of 2-phosphoglycerate and 3-phosphoglycerate. This chain is 2,3-bisphosphoglycerate-independent phosphoglycerate mutase, found in Methanocorpusculum labreanum (strain ATCC 43576 / DSM 4855 / Z).